The sequence spans 440 residues: Beta-1,3-galactosyl-O-glycosyl-glycoprotein beta-1,6-N-acetylglucosaminyltransferase 3 (440 aa).

Over 1 to 12 (MKMTGWKKKLCR) the chain is Cytoplasmic. A helical; Signal-anchor for type II membrane protein membrane pass occupies residues 13–30 (GHHLWALGCYMLLAVVAL). At 31–440 (RLSLRLKCDV…RHKAIYGTEL (410 aa)) the chain is on the lumenal side. N-linked (GlcNAc...) asparagine glycosylation is found at Asn72 and Asn108. 4 disulfide bridges follow: Cys73/Cys230, Cys164/Cys384, Cys185/Cys212, and Cys393/Cys425.

It belongs to the glycosyltransferase 14 family. Post-translationally, N-glycosylated. Primarily expressed in mucus-secreting tissues.

Its subcellular location is the golgi apparatus membrane. It catalyses the reaction a 3-O-[beta-D-galactosyl-(1-&gt;3)-N-acetyl-alpha-D-galactosaminyl]-L-seryl-[protein] + UDP-N-acetyl-alpha-D-glucosamine = 3-O-{beta-D-galactosyl-(1-&gt;3)-[N-acetyl-beta-D-glucosaminyl-(1-&gt;6)]-N-acetyl-alpha-D-galactosaminyl}-L-seryl-[protein] + UDP + H(+). The catalysed reaction is a 3-O-[beta-D-galactosyl-(1-&gt;3)-N-acetyl-alpha-D-galactosaminyl]-L-threonyl-[protein] + UDP-N-acetyl-alpha-D-glucosamine = a 3-O-{beta-D-galactosyl-(1-&gt;3)-[N-acetyl-beta-D-glucosaminyl-(1-&gt;6)]-N-acetyl-alpha-D-galactosaminyl}-L-threonyl-[protein] + UDP + H(+). It carries out the reaction a beta-D-Gal-(1-&gt;4)-beta-D-GlcNAc-(1-&gt;3)-beta-D-Gal-(1-&gt;4)-beta-D-GlcNAc derivative + UDP-N-acetyl-alpha-D-glucosamine = a beta-D-Gal-(1-&gt;4)-beta-D-GlcNAc-(1-&gt;3)-[beta-D-GlcNAc-(1-&gt;6)]-beta-D-Gal-(1-&gt;4)-N-acetyl-beta-D-glucosaminyl derivative + UDP + H(+). The enzyme catalyses 3-O-[N-acetyl-beta-D-glucosaminyl-(1-&gt;3)-N-acetyl-alpha-D-galactosaminyl]-L-seryl-[protein] + UDP-N-acetyl-alpha-D-glucosamine = 3-O-[N-acetyl-beta-D-glucosaminyl-(1-&gt;3)-[N-acetyl-beta-D-glucosaminyl-(1-&gt;6)]-N-acetyl-alpha-D-galactosaminyl]-L-seryl-[protein] + UDP + H(+). It catalyses the reaction a 3-O-[N-acetyl-beta-D-glucosaminyl-(1-&gt;3)-N-acetyl-alpha-D-galactosaminyl]-L-threonyl-[protein] + UDP-N-acetyl-alpha-D-glucosamine = 3-O-[N-acetyl-beta-D-glucosaminyl-(1-&gt;3)-[N-acetyl-beta-D-glucosaminyl-(1-&gt;6)]-N-acetyl-alpha-D-galactosaminyl]-L-threonyl-[protein] + UDP + H(+). Its pathway is protein modification; protein glycosylation. In terms of biological role, glycosyltransferase that can synthesize all known mucin beta 6 N-acetylglucosaminides. Mediates core 2 and core 4 O-glycan branching, 2 important steps in mucin-type biosynthesis. Also has I-branching enzyme activity by converting linear into branched poly-N-acetyllactosaminoglycans, leading to introduce the blood group I antigen during embryonic development. The chain is Beta-1,3-galactosyl-O-glycosyl-glycoprotein beta-1,6-N-acetylglucosaminyltransferase 3 (GCNT3) from Bos taurus (Bovine).